Consider the following 959-residue polypeptide: Vacuolar membrane protease (959 aa).

Residues 1–13 lie on the Cytoplasmic side of the membrane; sequence MARLNPLSFTPGP. Residues 14–34 form a helical membrane-spanning segment; it reads VIFFTCAVYIALFAALLTVHL. At 35–378 the chain is on the vacuolar side; sequence RVPDYPSKTP…KVFVVFQLHT (344 aa). N-linked (GlcNAc...) asparagine glycosylation is found at asparagine 48, asparagine 102, and asparagine 105. Positions 128-149 are disordered; it reads GSEDDEPYHSPQSSPPGERRLD. Histidine 158 and aspartate 170 together coordinate Zn(2+). The active-site Proton acceptor is glutamate 204. Zn(2+) is bound by residues glutamate 205, glutamate 230, and histidine 303. The helical transmembrane segment at 379-399 threads the bilayer; it reads MFALCVTLLVVAPLFLIGLTF. Residues 400-432 are Cytoplasmic-facing; sequence GLSKADKNYLFARKAYMYSSDDDHPVHLYGWRG. A helical membrane pass occupies residues 433–453; the sequence is FFRFPIVFSIATAVVVGLAYL. The Vacuolar portion of the chain corresponds to 454–463; sequence MVRLNPLILY. The chain crosses the membrane as a helical span at residues 464–484; sequence SSPYAVWSMMLSAWFSVAWFF. Residues 485 to 498 are Cytoplasmic-facing; sequence SRGASAMRPSALQR. Residues 499–519 traverse the membrane as a helical segment; sequence MYALIWLFAGSFALLAFVTVL. Residues 520–524 lie on the Vacuolar side of the membrane; sequence SNNYQ. A helical transmembrane segment spans residues 525-545; the sequence is VAGGYFALFYFAGIFLALVLS. At 546–645 the chain is on the cytoplasmic side; the sequence is YLELFFAPTK…YPGEQDWSGK (100 aa). Disordered regions lie at residues 566-594 and 606-635; these read DEPV…DATE and FARH…LKQP. Basic and acidic residues predominate over residues 612-626; it reads RRDSIDDENGNRDEE. Residues 646-666 form a helical membrane-spanning segment; sequence LPGWLWLLQLLLVAPIVVILV. Residues 667-688 lie on the Vacuolar side of the membrane; sequence GQIALLLTSALHQTPADGNSSL. Asparagine 685 carries an N-linked (GlcNAc...) asparagine glycan. A helical transmembrane segment spans residues 689-709; the sequence is FVYLAFALLTTLLLAPIGPFI. The Cytoplasmic portion of the chain corresponds to 710-716; sequence HRFTWHV. The helical transmembrane segment at 717-737 threads the bilayer; the sequence is PTFVFLVCVATVIYNLVAFPF. Residues 738–959 are Vacuolar-facing; it reads SREHRLKVYF…LVEGFKYFQV (222 aa). N-linked (GlcNAc...) asparagine glycans are attached at residues asparagine 785, asparagine 818, asparagine 834, asparagine 864, and asparagine 899.

It belongs to the peptidase M28 family. Requires Zn(2+) as cofactor.

The protein localises to the vacuole membrane. Its function is as follows. May be involved in vacuolar sorting and osmoregulation. The protein is Vacuolar membrane protease of Phaeosphaeria nodorum (strain SN15 / ATCC MYA-4574 / FGSC 10173) (Glume blotch fungus).